The sequence spans 235 residues: Protein FAM3B (235 aa).

An N-terminal signal peptide occupies residues 1 to 29 (MRPLAGGLLKVVFVVFASLCAWYSGYLLA). 2 disulfide bridges follow: C63–C91 and C69–C229. Residues 72-233 (DTYAYRLLSG…IQIEGCIPKE (162 aa)) form the GG-type lectin domain. Residues N120 and N208 are each glycosylated (N-linked (GlcNAc...) asparagine).

It belongs to the FAM3 family. Post-translationally, 2 N-termini have been observed in the mature protein: the first at Glu-30, resulting from signal peptide cleavage, the second at Ser-46. O-glycosylated. In terms of tissue distribution, highly expressed in the pancreas. Also found in the colon, kidney, prostate, small intestine and testis.

Its subcellular location is the secreted. Its function is as follows. Induces apoptosis of alpha and beta cells in a dose- and time-dependent manner. The polypeptide is Protein FAM3B (FAM3B) (Homo sapiens (Human)).